The sequence spans 472 residues: uncharacterized protein (472 aa).

Its subcellular location is the mitochondrion. This is an uncharacterized protein from Saccharomyces cerevisiae (strain ATCC 204508 / S288c) (Baker's yeast).